Consider the following 343-residue polypeptide: Hydroxycarboxylic acid receptor 1 (343 aa).

At Met1–Leu21 the chain is on the extracellular side. N-linked (GlcNAc...) asparagine glycosylation is present at Asn3. The helical transmembrane segment at Leu22–Phe42 threads the bilayer. The Cytoplasmic segment spans residues His43–Ser49. A helical membrane pass occupies residues Ser50–Leu70. Over Arg71–Leu90 the chain is Extracellular. The cysteines at positions 88 and 165 are disulfide-linked. A helical transmembrane segment spans residues Val91 to Val111. The Cytoplasmic segment spans residues Asp112–Thr131. Residues Ala132–Met152 traverse the membrane as a helical segment. At Glu153 to Gln182 the chain is on the extracellular side. A helical membrane pass occupies residues Leu183–Leu203. The Cytoplasmic segment spans residues Arg204–Arg220. A helical membrane pass occupies residues Phe221–Leu241. Topologically, residues Tyr242–Ala259 are extracellular. Residues Leu260–Phe280 form a helical membrane-spanning segment. Over Ser281–Cys343 the chain is Cytoplasmic. The segment covering Cys319–Ser334 has biased composition (polar residues). Positions Cys319–Cys343 are disordered.

Belongs to the G-protein coupled receptor 1 family. In terms of tissue distribution, highly expressed in subcutaneous fat and omental fat and detectable in lower levels in brain and many other tissues. High levels detected in epididymal and subcutaneous fat with slightly lower in omental fat, low levels are detected in the brain, skeletal muscle, kidney, liver and the pancreas (at protein level).

It is found in the cell membrane. Functionally, acts as a receptor for L-lactate and mediates its anti-lipolytic effect through a G(i)-protein-mediated pathway. The polypeptide is Hydroxycarboxylic acid receptor 1 (Hcar1) (Mus musculus (Mouse)).